Consider the following 461-residue polypeptide: Protein eva-1 (461 aa).

An N-terminal signal peptide occupies residues methionine 1 to glycine 22. Residues alanine 55–isoleucine 160 form the SUEL-type lectin domain. A helical membrane pass occupies residues valine 370–isoleucine 390. The segment at asparagine 397–proline 429 is disordered. The span at threonine 415 to proline 429 shows a compositional bias: polar residues.

The protein belongs to the EVA1 family. As to quaternary structure, interacts with sax-3. Interacts with slt-1. Interacts (via the SUEL-type lectin domain) with madd-4. Interacts (via the transmembrane domain) with unc-40.

It localises to the cell membrane. Acts as a receptor for slt-1. Required for the guidance of the AVM pioneer axon to the ventral nerve cord. Acts as a unc-40 coreceptor to enhance the sensitivity of unc-40 to the madd-4 midline guidance cue to guide muscle arm extensions (muscle arms) and AVM mechanosensory axons towards the dorsoventral midline. This chain is Protein eva-1 (eva-1), found in Caenorhabditis elegans.